The sequence spans 764 residues: 1,4-alpha-glucan branching enzyme GlgB (764 aa).

The active-site Nucleophile is the Asp431. Residue Glu484 is the Proton donor of the active site.

This sequence belongs to the glycosyl hydrolase 13 family. GlgB subfamily. In terms of assembly, monomer.

The enzyme catalyses Transfers a segment of a (1-&gt;4)-alpha-D-glucan chain to a primary hydroxy group in a similar glucan chain.. It functions in the pathway glycan biosynthesis; glycogen biosynthesis. In terms of biological role, catalyzes the formation of the alpha-1,6-glucosidic linkages in glycogen by scission of a 1,4-alpha-linked oligosaccharide from growing alpha-1,4-glucan chains and the subsequent attachment of the oligosaccharide to the alpha-1,6 position. The polypeptide is 1,4-alpha-glucan branching enzyme GlgB (Synechococcus sp. (strain CC9902)).